The sequence spans 284 residues: MNNIGIAINPSKDVDNRILNMVVKKFKEKFNLKNIEVFNSFDIEEQNLADIDLLIVLGGDGTLLGIARSLNDSFNSPILGINIGNLGFLSSVDISDIDIALEKLKDGKYKFVDRMMLNCKVESDENKEELKALNDVVLARGTLSRMVKFTIFVDGKIYSTFKGDGLIIATPTGSTAYSFSAGGPFIYPDLELITITPICPHTKSMQTIVLKGDSVIDIYADHEEEKIYLTVDGQKAIKINHETSVKVSKNKKSVKLLVFDDYDYFKVLRSKILNNSKECDGEKL.

D60 acts as the Proton acceptor in catalysis. NAD(+)-binding positions include 60–61 (DG), 134–135 (ND), R145, K162, D164, 175–180 (TAYSFS), and Q234.

The protein belongs to the NAD kinase family. Requires a divalent metal cation as cofactor.

The protein localises to the cytoplasm. It catalyses the reaction NAD(+) + ATP = ADP + NADP(+) + H(+). In terms of biological role, involved in the regulation of the intracellular balance of NAD and NADP, and is a key enzyme in the biosynthesis of NADP. Catalyzes specifically the phosphorylation on 2'-hydroxyl of the adenosine moiety of NAD to yield NADP. The chain is NAD kinase from Clostridium beijerinckii (strain ATCC 51743 / NCIMB 8052) (Clostridium acetobutylicum).